We begin with the raw amino-acid sequence, 585 residues long: Phosphomethylpyrimidine synthase (585 aa).

Residues 89–107 show a composition bias toward basic and acidic residues; the sequence is RGDTESYEGRHVKPEDNGY. The interval 89 to 116 is disordered; the sequence is RGDTESYEGRHVKPEDNGYRSRNGSHQH. Residues N199, M228, Y257, H293, 313 to 315, 354 to 357, and E393 contribute to the substrate site; these read SRG and DGLR. H397 provides a ligand contact to Zn(2+). Residue Y420 coordinates substrate. Position 461 (H461) interacts with Zn(2+). 3 residues coordinate [4Fe-4S] cluster: C541, C544, and C549.

It belongs to the ThiC family. Requires [4Fe-4S] cluster as cofactor.

The catalysed reaction is 5-amino-1-(5-phospho-beta-D-ribosyl)imidazole + S-adenosyl-L-methionine = 4-amino-2-methyl-5-(phosphooxymethyl)pyrimidine + CO + 5'-deoxyadenosine + formate + L-methionine + 3 H(+). It participates in cofactor biosynthesis; thiamine diphosphate biosynthesis. Catalyzes the synthesis of the hydroxymethylpyrimidine phosphate (HMP-P) moiety of thiamine from aminoimidazole ribotide (AIR) in a radical S-adenosyl-L-methionine (SAM)-dependent reaction. The chain is Phosphomethylpyrimidine synthase from Bacillus pumilus (strain SAFR-032).